Consider the following 963-residue polypeptide: Kinesin-1 heavy chain (963 aa).

Residue Ala2 is modified to N-acetylalanine. The Kinesin motor domain occupies 8–325 (NIKVMCRFRP…LLFGQRAKTI (318 aa)). Position 85–92 (85–92 (GQTSSGKT)) interacts with ATP. Lys213 participates in a covalent cross-link: Glycyl lysine isopeptide (Lys-Gly) (interchain with G-Cter in SUMO2). Residues 329 to 914 (VCVNVELTAE…AVRSKNMARR (586 aa)) are a coiled coil. Positions 908 to 963 (SKNMARRGHSAQIAKPIRPGQHPAASPTHPSAIRGGGAFVQNSQPVAVRGGGGKQV) are disordered. A globular region spans residues 915–963 (GHSAQIAKPIRPGQHPAASPTHPSAIRGGGAFVQNSQPVAVRGGGGKQV). Residue Ser933 is modified to Phosphoserine. Arg956 bears the Omega-N-methylarginine mark.

It belongs to the TRAFAC class myosin-kinesin ATPase superfamily. Kinesin family. Kinesin subfamily. As to quaternary structure, oligomer composed of two heavy chains and two light chains. Interacts with GRIP1 and PPP1R42. Interacts with SYBU. Interacts with JAKMIP1. Interacts with PLEKHM2. Interacts with ECPAS. Interacts with ZFYVE27. Found in a complex with OGT, RHOT1, RHOT2 and TRAK1. Interacts with APP (via cytoplasmic domain).

It is found in the cytoplasm. The protein localises to the cytoskeleton. The protein resides in the cytolytic granule membrane. It localises to the lysosome membrane. In terms of biological role, microtubule-dependent motor required for normal distribution of mitochondria and lysosomes. Can induce formation of neurite-like membrane protrusions in non-neuronal cells in a ZFYVE27-dependent manner. Regulates centrosome and nuclear positioning during mitotic entry. During the G2 phase of the cell cycle in a BICD2-dependent manner, antagonizes dynein function and drives the separation of nuclei and centrosomes. Required for anterograde axonal transportation of MAPK8IP3/JIP3 which is essential for MAPK8IP3/JIP3 function in axon elongation. Through binding with PLEKHM2 and ARL8B, directs lysosome movement toward microtubule plus ends. Involved in NK cell-mediated cytotoxicity. Drives the polarization of cytolytic granules and microtubule-organizing centers (MTOCs) toward the immune synapse between effector NK lymphocytes and target cells. The protein is Kinesin-1 heavy chain of Homo sapiens (Human).